We begin with the raw amino-acid sequence, 542 residues long: Peptide chain release factor 3 (542 aa).

Residues 14-283 (ERRRNFAIIS…AFLDYALKPA (270 aa)) enclose the tr-type G domain. GTP contacts are provided by residues 23-30 (SHPDAGKT), 91-95 (DTPGH), and 145-148 (NKLD).

The protein belongs to the TRAFAC class translation factor GTPase superfamily. Classic translation factor GTPase family. PrfC subfamily.

Its subcellular location is the cytoplasm. In terms of biological role, increases the formation of ribosomal termination complexes and stimulates activities of RF-1 and RF-2. It binds guanine nucleotides and has strong preference for UGA stop codons. It may interact directly with the ribosome. The stimulation of RF-1 and RF-2 is significantly reduced by GTP and GDP, but not by GMP. This chain is Peptide chain release factor 3, found in Cyanothece sp. (strain PCC 7425 / ATCC 29141).